An 849-amino-acid polypeptide reads, in one-letter code: Leucine--tRNA ligase (849 aa).

Positions 44–54 match the 'HIGH' region motif; it reads PYPSGRIHMGH. The 'KMSKS' region motif lies at 620 to 624; that stretch reads KMSKS. Position 623 (K623) interacts with ATP.

This sequence belongs to the class-I aminoacyl-tRNA synthetase family.

Its subcellular location is the cytoplasm. The catalysed reaction is tRNA(Leu) + L-leucine + ATP = L-leucyl-tRNA(Leu) + AMP + diphosphate. This chain is Leucine--tRNA ligase, found in Sphingopyxis alaskensis (strain DSM 13593 / LMG 18877 / RB2256) (Sphingomonas alaskensis).